Here is an 82-residue protein sequence, read N- to C-terminus: MVVIRMARGGAKKRPFYRIVVADKRSPRDGRFIEKLGFFNPLAKGGEERLKLDVAKAEAWLAKGAQPSDRVASLIKEAKKVA.

The protein belongs to the bacterial ribosomal protein bS16 family.

This is Small ribosomal subunit protein bS16 from Francisella philomiragia subsp. philomiragia (strain ATCC 25017 / CCUG 19701 / FSC 153 / O#319-036).